The sequence spans 138 residues: Large ribosomal subunit protein eL32 (138 aa).

This sequence belongs to the eukaryotic ribosomal protein eL32 family.

The protein is Large ribosomal subunit protein eL32 (rpl32e) of Saccharolobus solfataricus (strain ATCC 35092 / DSM 1617 / JCM 11322 / P2) (Sulfolobus solfataricus).